The primary structure comprises 261 residues: Carnitinyl-CoA dehydratase (261 aa).

Residue E111 is the Nucleophile of the active site. E131 functions as the Proton acceptor in the catalytic mechanism.

Belongs to the enoyl-CoA hydratase/isomerase family.

The catalysed reaction is (R)-carnitinyl-CoA = crotonobetainyl-CoA + H2O. Its pathway is amine and polyamine metabolism; carnitine metabolism. In terms of biological role, catalyzes the reversible dehydration of L-carnitinyl-CoA to crotonobetainyl-CoA. The protein is Carnitinyl-CoA dehydratase of Salmonella typhi.